Here is a 275-residue protein sequence, read N- to C-terminus: MALVKVKPTSAGRRGMVKVVSPKLHKGAPHAALLEKKTRGSGRNNNGHITVRHRGGGHKQHYRVVDFRRNKDGIPAKVERLEYDPNRTAHIALLCYADGERRYIIAPRGLEVGATLISGIEAPIRAGNTLPIRNIPVGTTIHCIEMIPGKGAQMARSAGASAVLMAREGTYAQVRLRSGEVRRVHIQCRATIGEVGNEEHSLRQIGKAGAMRWRGVRPTVRGVAMNPIDHPHGGGEGRTGEAREPVSPWGTPAKGFKTRRNKRTNNMIVQRRKRK.

Disordered regions lie at residues 38–59 and 223–275; these read TRGS…GGHK and VAMN…RKRK. Over residues 50-59 the composition is skewed to basic residues; sequence TVRHRGGGHK. The segment covering 229 to 244 has biased composition (basic and acidic residues); the sequence is DHPHGGGEGRTGEARE.

It belongs to the universal ribosomal protein uL2 family. In terms of assembly, part of the 50S ribosomal subunit. Forms a bridge to the 30S subunit in the 70S ribosome.

In terms of biological role, one of the primary rRNA binding proteins. Required for association of the 30S and 50S subunits to form the 70S ribosome, for tRNA binding and peptide bond formation. It has been suggested to have peptidyltransferase activity; this is somewhat controversial. Makes several contacts with the 16S rRNA in the 70S ribosome. This Bordetella bronchiseptica (strain ATCC BAA-588 / NCTC 13252 / RB50) (Alcaligenes bronchisepticus) protein is Large ribosomal subunit protein uL2.